Consider the following 188-residue polypeptide: Adenine phosphoribosyltransferase (188 aa).

Belongs to the purine/pyrimidine phosphoribosyltransferase family. Homodimer.

The protein resides in the cytoplasm. The catalysed reaction is AMP + diphosphate = 5-phospho-alpha-D-ribose 1-diphosphate + adenine. It functions in the pathway purine metabolism; AMP biosynthesis via salvage pathway; AMP from adenine: step 1/1. Its function is as follows. Catalyzes a salvage reaction resulting in the formation of AMP, that is energically less costly than de novo synthesis. The protein is Adenine phosphoribosyltransferase of Paraburkholderia phymatum (strain DSM 17167 / CIP 108236 / LMG 21445 / STM815) (Burkholderia phymatum).